A 196-amino-acid polypeptide reads, in one-letter code: uncharacterized protein (196 aa).

This sequence to H.influenzae HI_0431.

This is an uncharacterized protein from Salmonella typhi.